A 648-amino-acid chain; its full sequence is Zinc finger protein 202 (648 aa).

Residue Lys22 forms a Glycyl lysine isopeptide (Lys-Gly) (interchain with G-Cter in SUMO2) linkage. The SCAN box domain occupies 46 to 127 (HQNFRRFRYQ…VTLVEGLQKQ (82 aa)). A disordered region spans residues 146 to 221 (SEETVHLGVE…PDLPAERSSG (76 aa)). A compositionally biased stretch (polar residues) spans 165–182 (PVQSSTPEQSPEETTQSP). In terms of domain architecture, KRAB spans 237–308 (VTFKDVAVCF…DIQEPQETQE (72 aa)). 2 C2H2-type zinc fingers span residues 397–419 (HDCS…LRTH) and 425–447 (YKCM…QKVH). Residues Lys454 and Lys460 each participate in a glycyl lysine isopeptide (Lys-Gly) (interchain with G-Cter in SUMO2) cross-link. Ser466 carries the post-translational modification Phosphoserine. Residues 481 to 503 (YRCDDCGKHFRWTSDLVRHQRTH) form a C2H2-type 3 zinc finger. Residues Lys507 and Lys521 each participate in a glycyl lysine isopeptide (Lys-Gly) (interchain with G-Cter in SUMO2) cross-link. 5 C2H2-type zinc fingers span residues 509–531 (FFCT…QRIH), 537–559 (YLCG…RKTH), 565–587 (YLCS…LRGH), 593–615 (CRCN…QRTH), and 621–643 (FTCP…QRTH).

Interacts with SDP1. As to expression, highly expressed in testis. Also expressed in breast carcinoma cell lines.

Its subcellular location is the nucleus. Its function is as follows. Transcriptional repressor that binds to elements found predominantly in genes that participate in lipid metabolism. Among its targets are structural components of lipoprotein particles (apolipoproteins AIV, CIII, and E), enzymes involved in lipid processing (lipoprotein lipase, lecithin cholesteryl ester transferase), transporters involved in lipid homeostasis (ABCA1, ABCG1), and several genes involved in processes related to energy metabolism and vascular disease. In Homo sapiens (Human), this protein is Zinc finger protein 202 (ZNF202).